The primary structure comprises 387 residues: Succinate--CoA ligase [ADP-forming] subunit beta (387 aa).

An ATP-grasp domain is found at lysine 9–lysine 245. Residues lysine 46, glycine 53–glycine 55, glutamate 100, tyrosine 103, and glutamate 108 contribute to the ATP site. The Mg(2+) site is built by asparagine 200 and aspartate 214. Substrate-binding positions include asparagine 265 and glycine 322 to valine 324.

This sequence belongs to the succinate/malate CoA ligase beta subunit family. In terms of assembly, heterotetramer of two alpha and two beta subunits. The cofactor is Mg(2+).

It carries out the reaction succinate + ATP + CoA = succinyl-CoA + ADP + phosphate. It catalyses the reaction GTP + succinate + CoA = succinyl-CoA + GDP + phosphate. The protein operates within carbohydrate metabolism; tricarboxylic acid cycle; succinate from succinyl-CoA (ligase route): step 1/1. Its function is as follows. Succinyl-CoA synthetase functions in the citric acid cycle (TCA), coupling the hydrolysis of succinyl-CoA to the synthesis of either ATP or GTP and thus represents the only step of substrate-level phosphorylation in the TCA. The beta subunit provides nucleotide specificity of the enzyme and binds the substrate succinate, while the binding sites for coenzyme A and phosphate are found in the alpha subunit. The sequence is that of Succinate--CoA ligase [ADP-forming] subunit beta from Francisella tularensis subsp. tularensis (strain FSC 198).